A 179-amino-acid chain; its full sequence is MSRVAKNPVKLPSGVEVKLVGQLLSVKGPKGTLELIIHSSVEVEIVEEAGELRFAARNGDQQTRAMAGTTRALVNNMVQGVSQGFERKLQLVGVGYKAQAKGTVLNLALGFSHPVDYELPNGITAETPSQTDILIRGIDKQLVGQVAAEIRDFRRPEPYKGKGVRYADEVVRRKEAKKK.

It belongs to the universal ribosomal protein uL6 family. As to quaternary structure, part of the 50S ribosomal subunit.

Functionally, this protein binds to the 23S rRNA, and is important in its secondary structure. It is located near the subunit interface in the base of the L7/L12 stalk, and near the tRNA binding site of the peptidyltransferase center. The chain is Large ribosomal subunit protein uL6 from Pseudomonas savastanoi pv. phaseolicola (strain 1448A / Race 6) (Pseudomonas syringae pv. phaseolicola (strain 1448A / Race 6)).